Reading from the N-terminus, the 42-residue chain is Photosystem I reaction center subunit IX (42 aa).

Residues 7–27 traverse the membrane as a helical segment; the sequence is YLSVAPVLSTLWFGSLAGLLI.

The protein belongs to the PsaJ family.

Its subcellular location is the plastid. It is found in the chloroplast thylakoid membrane. In terms of biological role, may help in the organization of the PsaE and PsaF subunits. This is Photosystem I reaction center subunit IX from Daucus carota (Wild carrot).